We begin with the raw amino-acid sequence, 252 residues long: 5-oxoprolinase subunit A (252 aa).

This sequence belongs to the LamB/PxpA family. In terms of assembly, forms a complex composed of PxpA, PxpB and PxpC.

It carries out the reaction 5-oxo-L-proline + ATP + 2 H2O = L-glutamate + ADP + phosphate + H(+). In terms of biological role, catalyzes the cleavage of 5-oxoproline to form L-glutamate coupled to the hydrolysis of ATP to ADP and inorganic phosphate. This is 5-oxoprolinase subunit A from Staphylococcus epidermidis (strain ATCC 35984 / DSM 28319 / BCRC 17069 / CCUG 31568 / BM 3577 / RP62A).